The chain runs to 389 residues: Pyruvate dehydrogenase E1 component subunit alpha, somatic form, mitochondrial (389 aa).

A mitochondrion-targeting transit peptide spans 1 to 28 (GKMLAAVSRVLSGVAQKPASRVLVASRT). At Lys-62 the chain carries N6-acetyllysine; alternate. Lys-62 carries the post-translational modification N6-succinyllysine; alternate. Residues His-91, Tyr-117, Arg-118, Ala-156, Gly-164, Val-166, Asp-195, Gly-196, Ala-197, Asn-224, and Tyr-226 each coordinate pyruvate. 2 residues coordinate thiamine diphosphate: Tyr-117 and Arg-118. Residues Gly-164, Val-166, Asp-195, Gly-196, Ala-197, and Asn-224 each coordinate thiamine diphosphate. Residue Asp-195 coordinates Mg(2+). 2 residues coordinate Mg(2+): Asn-224 and Tyr-226. Residue Ser-231 is modified to Phosphoserine; by PDK1. Position 243 is an N6-acetyllysine; alternate (Lys-243). Residue Lys-243 is modified to N6-succinyllysine; alternate. N6-succinyllysine is present on Lys-276. His-291 serves as a coordination point for thiamine diphosphate. Position 292 is a phosphoserine; by PDK1, PDK2, PDK3 and PDK4 (Ser-292). At Ser-294 the chain carries Phosphoserine. The residue at position 299 (Ser-299) is a Phosphoserine; by PDK1, PDK2, PDK3 and PDK4. At Tyr-300 the chain carries Phosphotyrosine. Lys-312 is subject to N6-acetyllysine; alternate. Lys-312 is subject to N6-succinyllysine; alternate. N6-acetyllysine occurs at positions 320 and 335. The residue at position 384 (Lys-384) is an N6-succinyllysine.

As to quaternary structure, heterotetramer of two PDHA1 and two PDHB subunits. The heterotetramer interacts with DLAT, and is part of the multimeric pyruvate dehydrogenase complex that contains multiple copies of pyruvate dehydrogenase (E1), dihydrolipoamide acetyltransferase (DLAT, E2) and lipoamide dehydrogenase (DLD, E3). These subunits are bound to an inner core composed of about 48 DLAT and 12 PDHX molecules. The cofactor is thiamine diphosphate. Mg(2+) serves as cofactor. In terms of processing, phosphorylation at Ser-231, Ser-292 and Ser-299 by PDK family kinases inactivates the enzyme; for this phosphorylation at a single site is sufficient. Phosphorylation at Ser-292 interferes with access to active site, and thereby inactivates the enzyme. Dephosphorylation at all three sites, i.e. at Ser-231, Ser-292 and Ser-299, is required for reactivation. Post-translationally, acetylation alters the phosphorylation pattern. Deacetylated by SIRT3.

The protein resides in the mitochondrion matrix. It catalyses the reaction N(6)-[(R)-lipoyl]-L-lysyl-[protein] + pyruvate + H(+) = N(6)-[(R)-S(8)-acetyldihydrolipoyl]-L-lysyl-[protein] + CO2. Its activity is regulated as follows. Pyruvate dehydrogenase activity is inhibited by phosphorylation of PDHA1; it is reactivated by dephosphorylation. Its function is as follows. The pyruvate dehydrogenase complex catalyzes the overall conversion of pyruvate to acetyl-CoA and CO(2), and thereby links the glycolytic pathway to the tricarboxylic cycle. The polypeptide is Pyruvate dehydrogenase E1 component subunit alpha, somatic form, mitochondrial (PDHA1) (Sus scrofa (Pig)).